A 495-amino-acid polypeptide reads, in one-letter code: WD repeat-containing protein 37 (495 aa).

Composition is skewed to polar residues over residues Met-1–Gln-13 and Ser-22–Ser-31. The segment at Met-1–Leu-50 is disordered. A compositionally biased stretch (basic and acidic residues) spans Glu-32–Asp-47. WD repeat units lie at residues Gly-154–Lys-194 and Gly-197–Gln-236. The tract at residues Pro-237 to Ser-266 is disordered. Positions Gly-246–Val-264 are enriched in acidic residues. WD repeat units lie at residues Ser-280–Ser-319, Gly-322–Val-361, Gly-366–Ala-404, Arg-407–Leu-446, and Gly-453–Glu-494.

As to quaternary structure, forms homodimers. Interacts with PACS1. Interacts with PACS2.

Its subcellular location is the cytoplasm. It localises to the nucleus. Required for normal ER Ca2+ handling in lymphocytes. Together with PACS1, it plays an essential role in stabilizing peripheral lymphocyte populations. The chain is WD repeat-containing protein 37 (WDR37) from Pongo abelii (Sumatran orangutan).